A 121-amino-acid polypeptide reads, in one-letter code: Small ribosomal subunit protein uS13 (121 aa).

The disordered stretch occupies residues 92 to 121 (RKGLPMRGQRTRTNARTRKGPRRAAQALKK).

The protein belongs to the universal ribosomal protein uS13 family. Part of the 30S ribosomal subunit. Forms a loose heterodimer with protein S19. Forms two bridges to the 50S subunit in the 70S ribosome.

In terms of biological role, located at the top of the head of the 30S subunit, it contacts several helices of the 16S rRNA. In the 70S ribosome it contacts the 23S rRNA (bridge B1a) and protein L5 of the 50S subunit (bridge B1b), connecting the 2 subunits; these bridges are implicated in subunit movement. Contacts the tRNAs in the A and P-sites. The protein is Small ribosomal subunit protein uS13 of Burkholderia cenocepacia (strain HI2424).